We begin with the raw amino-acid sequence, 234 residues long: Small ribosomal subunit protein uS3 (234 aa).

The KH type-2 domain occupies 39 to 107 (IRKYVKKELY…EIAVNIKEER (69 aa)). Residues 213 to 222 (PTEKAEETTS) show a composition bias toward basic and acidic residues. The tract at residues 213–234 (PTEKAEETTSKPKRRPAKKRGK) is disordered. Over residues 223 to 234 (KPKRRPAKKRGK) the composition is skewed to basic residues.

It belongs to the universal ribosomal protein uS3 family. In terms of assembly, part of the 30S ribosomal subunit. Forms a tight complex with proteins S10 and S14.

In terms of biological role, binds the lower part of the 30S subunit head. Binds mRNA in the 70S ribosome, positioning it for translation. This chain is Small ribosomal subunit protein uS3, found in Aliarcobacter butzleri (strain RM4018) (Arcobacter butzleri).